Here is a 183-residue protein sequence, read N- to C-terminus: Large ribosomal subunit protein uL6 (183 aa).

This sequence belongs to the universal ribosomal protein uL6 family. Part of the 50S ribosomal subunit.

This protein binds to the 23S rRNA, and is important in its secondary structure. It is located near the subunit interface in the base of the L7/L12 stalk, and near the tRNA binding site of the peptidyltransferase center. The polypeptide is Large ribosomal subunit protein uL6 (Chlamydia abortus (strain DSM 27085 / S26/3) (Chlamydophila abortus)).